The sequence spans 373 residues: Putative glutamate--cysteine ligase 2 (373 aa).

It belongs to the glutamate--cysteine ligase type 2 family. YbdK subfamily. As to quaternary structure, homodimer.

The catalysed reaction is L-cysteine + L-glutamate + ATP = gamma-L-glutamyl-L-cysteine + ADP + phosphate + H(+). Functionally, ATP-dependent carboxylate-amine ligase which exhibits weak glutamate--cysteine ligase activity. The sequence is that of Putative glutamate--cysteine ligase 2 from Enterobacter sp. (strain 638).